The sequence spans 347 residues: Glycerol-1-phosphate dehydrogenase [NAD(P)+] (347 aa).

Residues 90 to 94 (GRPVD) and 112 to 115 (TAIS) contribute to the NAD(+) site. Residue D117 coordinates substrate. S121 lines the NAD(+) pocket. D165 provides a ligand contact to substrate. The Zn(2+) site is built by D165 and H245. H249 provides a ligand contact to substrate. Residue H262 coordinates Zn(2+).

It belongs to the glycerol-1-phosphate dehydrogenase family. Homodimer. The cofactor is Zn(2+).

The protein resides in the cytoplasm. It catalyses the reaction sn-glycerol 1-phosphate + NAD(+) = dihydroxyacetone phosphate + NADH + H(+). The enzyme catalyses sn-glycerol 1-phosphate + NADP(+) = dihydroxyacetone phosphate + NADPH + H(+). It participates in membrane lipid metabolism; glycerophospholipid metabolism. In terms of biological role, catalyzes the NAD(P)H-dependent reduction of dihydroxyacetonephosphate (DHAP or glycerone phosphate) to glycerol 1-phosphate (G1P). The G1P thus generated is used as the glycerophosphate backbone of phospholipids in the cellular membranes of Archaea. In Thermofilum pendens (strain DSM 2475 / Hrk 5), this protein is Glycerol-1-phosphate dehydrogenase [NAD(P)+].